The primary structure comprises 244 residues: MGRGRVELKRIENKINRQVTFSKRRNGLLKKAYELSVLCDAEVALIIFSSRGKLYEFGSAGTTKTLERYQRVCYTPQDNNMECETQSWYQEVSKLKAKYESLQRTQRHLLGEDLGPLSVKELQNLEKQLEGALAQARQRKTQMMIEQMEDLRRKERQLGDLNKQLKLKLEAEGQSLKAIQGSWNPSTATAGNSSFPVHPSQSNPMDCEPEPILQIGYHHYVPAEGPSVSKSMAGESNFIQGWVL.

Residues 1 to 61 (MGRGRVELKR…GKLYEFGSAG (61 aa)) enclose the MADS-box domain. Residues 85-175 (TQSWYQEVSK…KLKLEAEGQS (91 aa)) enclose the K-box domain. The disordered stretch occupies residues 180–206 (QGSWNPSTATAGNSSFPVHPSQSNPMD). The span at 181–204 (GSWNPSTATAGNSSFPVHPSQSNP) shows a compositional bias: polar residues.

In terms of tissue distribution, expressed in flowers and seeds.

It localises to the nucleus. Functionally, probable transcription factor involved in flower development. This Vitis vinifera (Grape) protein is Agamous-like MADS-box protein MADS3.